We begin with the raw amino-acid sequence, 317 residues long: tRNA dimethylallyltransferase (317 aa).

14-21 serves as a coordination point for ATP; it reads GPTAVGKT. 16-21 contacts substrate; sequence TAVGKT. The interval 39 to 42 is interaction with substrate tRNA; sequence DSMQ.

It belongs to the IPP transferase family. As to quaternary structure, monomer. The cofactor is Mg(2+).

It carries out the reaction adenosine(37) in tRNA + dimethylallyl diphosphate = N(6)-dimethylallyladenosine(37) in tRNA + diphosphate. Its function is as follows. Catalyzes the transfer of a dimethylallyl group onto the adenine at position 37 in tRNAs that read codons beginning with uridine, leading to the formation of N6-(dimethylallyl)adenosine (i(6)A). This chain is tRNA dimethylallyltransferase, found in Bacillus mycoides (strain KBAB4) (Bacillus weihenstephanensis).